An 87-amino-acid chain; its full sequence is Small ribosomal subunit protein uS19m (87 aa).

The protein belongs to the universal ribosomal protein uS19 family.

Its subcellular location is the mitochondrion. This Dictyostelium citrinum (Slime mold) protein is Small ribosomal subunit protein uS19m (mrps19).